Here is a 758-residue protein sequence, read N- to C-terminus: Protein hunchback (758 aa).

Disordered stretches follow at residues 30–51 (EPGHHLDGNSVASSPRQSPIPS) and 172–214 (EKLQ…EDMK). The span at 39–51 (SVASSPRQSPIPS) shows a compositional bias: polar residues. T178 is modified (phosphothreonine). Residues S188, S207, S209, and S210 each carry the phosphoserine modification. Basic and acidic residues predominate over residues 198 to 214 (EPEKEHDQMSNSSEDMK). C2H2-type zinc fingers lie at residues 240–262 (YKCKTCGVVAITKVDFWAHTRTH), 269–291 (LQCPKCPFVTEFKHHLEYHIRKH), 297–319 (FQCDKCSYTCVNKSMLNSHRKSH), and 325–349 (YRCADCDYATKYCHSFKLHLRKYGH). Disordered regions lie at residues 365–416 (LVID…PVAT) and 513–536 (QLQQQNQQQSDNEEEEQDDEYERK). 2 stretches are compositionally biased toward low complexity: residues 398–415 (VAAVAPQQQQSQPAQPVA) and 513–522 (QLQQQNQQQS). The segment covering 523 to 532 (DNEEEEQDDE) has biased composition (acidic residues). S537 and S540 each carry phosphoserine. Residues 603 to 695 (MTSPEQLKVP…TTSAVAAPPS (93 aa)) form a disordered region. A compositionally biased stretch (low complexity) spans 652–695 (ANTSASSTASSSGNSSNASSNSNGNSSSNSSSNGTTSAVAAPPS). 2 consecutive C2H2-type zinc fingers follow at residues 705 to 727 (YECKYCDIFFKDAVLYTIHMGYH) and 733 to 757 (FKCNMCGEKCDGPVGLFVHMARNAH).

It belongs to the hunchback C2H2-type zinc-finger protein family. In terms of tissue distribution, in embryo, expression of maternal transcript is highest in anterior region. Zygotic transcript is expressed in anterior region until the beginning of gastrulation and in posterior region until early gastrulation. After this, it is expressed in developing nervous system.

The protein localises to the nucleus. Functionally, gap class segmentation protein that controls development of head structures. The chain is Protein hunchback from Drosophila melanogaster (Fruit fly).